The following is a 283-amino-acid chain: Agmatinase (283 aa).

Positions 112, 131, 133, 135, 211, and 213 each coordinate a divalent metal cation.

Belongs to the arginase family. Agmatinase subfamily. Homotetramer. The cofactor is a divalent metal cation.

It catalyses the reaction agmatine + H2O = urea + putrescine. Its pathway is amine and polyamine biosynthesis; putrescine biosynthesis via agmatine pathway; putrescine from agmatine: step 1/1. With respect to regulation, inhibited by putrescine. Activity is not affected by arginine and ornithine. Its function is as follows. Catalyzes the formation of putrescine from agmatine. Cannot use arginine. The chain is Agmatinase from Pyrococcus horikoshii (strain ATCC 700860 / DSM 12428 / JCM 9974 / NBRC 100139 / OT-3).